A 365-amino-acid polypeptide reads, in one-letter code: Peridinin-chlorophyll a-binding protein, chloroplastic (365 aa).

Residues 1–52 (MVRGARKAIAVGVAVAVACGLQKHLNFVPGPRHAAPVAAAAASMMMAPAAFA) constitute a chloroplast transit peptide. 2 repeat units span residues 53–215 (DEIG…VPSG) and 216–365 (DKIG…ASQR).

As to quaternary structure, monomer.

Its subcellular location is the plastid. It is found in the chloroplast. In terms of biological role, water-soluble antenna for capture of solar energy in the blue-green range. Peridinin is an asymmetric carotenoid. This chain is Peridinin-chlorophyll a-binding protein, chloroplastic, found in Symbiodinium sp. (Dinoflagellate).